We begin with the raw amino-acid sequence, 64 residues long: Conotoxin mr5.1a (64 aa).

An N-terminal signal peptide occupies residues 1–19 (MRCVPVFVILLLLIASAPS). The propeptide occupies 20–48 (VDARLKTKDDMPLPSSHANIKRTLQIHRN). Glu-60 is subject to 4-carboxyglutamate.

It belongs to the conotoxin T superfamily. Post-translationally, contains 2 disulfide bonds that can be either 'C1-C3, C2-C4' or 'C1-C4, C2-C3', since these disulfide connectivities have been observed for conotoxins with cysteine framework V (for examples, see AC P0DQQ7 and AC P81755). Expressed by the venom duct.

The protein resides in the secreted. The protein is Conotoxin mr5.1a of Conus marmoreus (Marble cone).